The sequence spans 150 residues: UPF0756 membrane protein YPN_1328 (150 aa).

4 consecutive transmembrane segments (helical) span residues 16–36 (ALGILSHNMTVTLAILILIAI), 51–71 (YGLTIGVLILTIGVMAPIASG), 88–108 (ILAIVVGVAVSWLGGRGVSLM), and 114–134 (VVAGLLVGTVLGVALFKGVPV).

It belongs to the UPF0756 family.

It localises to the cell membrane. The protein is UPF0756 membrane protein YPN_1328 of Yersinia pestis bv. Antiqua (strain Nepal516).